We begin with the raw amino-acid sequence, 313 residues long: Calcyphosin-2 (313 aa).

EF-hand domains follow at residues 144–179 (RILT…FHLE), 180–215 (VSEK…EMNE), and 216–251 (YRKS…KKHS). 5 residues coordinate Ca(2+): aspartate 193, asparagine 195, asparagine 197, lysine 199, and glutamate 204.

This chain is Calcyphosin-2 (CAPS2), found in Macaca fascicularis (Crab-eating macaque).